The sequence spans 231 residues: Small ribosomal subunit protein uS5 (231 aa).

The tract at residues 1-63 (MADLENKTVK…KSVDRANKVK (63 aa)) is disordered. A compositionally biased stretch (basic and acidic residues) spans 29-60 (KRTESGAKKQIWEKRSAHDSKDMPKKSVDRAN). Residues 75-138 (FSEKVVNISR…KDARNHLISV (64 aa)) enclose the S5 DRBM domain.

The protein belongs to the universal ribosomal protein uS5 family. Part of the 30S ribosomal subunit. Contacts proteins S4 and S8.

Functionally, with S4 and S12 plays an important role in translational accuracy. Its function is as follows. Located at the back of the 30S subunit body where it stabilizes the conformation of the head with respect to the body. The sequence is that of Small ribosomal subunit protein uS5 from Mycoplasmopsis agalactiae (strain NCTC 10123 / CIP 59.7 / PG2) (Mycoplasma agalactiae).